A 618-amino-acid polypeptide reads, in one-letter code: 1-deoxy-D-xylulose-5-phosphate synthase (618 aa).

Thiamine diphosphate-binding positions include H74 and 115–117 (GHS). D146 serves as a coordination point for Mg(2+). Residues 147–148 (GA), N175, Y286, and E366 each bind thiamine diphosphate. N175 serves as a coordination point for Mg(2+).

Belongs to the transketolase family. DXPS subfamily. In terms of assembly, homodimer. Requires Mg(2+) as cofactor. Thiamine diphosphate serves as cofactor.

It carries out the reaction D-glyceraldehyde 3-phosphate + pyruvate + H(+) = 1-deoxy-D-xylulose 5-phosphate + CO2. Its pathway is metabolic intermediate biosynthesis; 1-deoxy-D-xylulose 5-phosphate biosynthesis; 1-deoxy-D-xylulose 5-phosphate from D-glyceraldehyde 3-phosphate and pyruvate: step 1/1. Its function is as follows. Catalyzes the acyloin condensation reaction between C atoms 2 and 3 of pyruvate and glyceraldehyde 3-phosphate to yield 1-deoxy-D-xylulose-5-phosphate (DXP). This chain is 1-deoxy-D-xylulose-5-phosphate synthase, found in Clostridium tetani (strain Massachusetts / E88).